We begin with the raw amino-acid sequence, 184 residues long: NADH-quinone oxidoreductase subunit B (184 aa).

Positions 63, 64, 128, and 158 each coordinate [4Fe-4S] cluster.

The protein belongs to the complex I 20 kDa subunit family. As to quaternary structure, NDH-1 is composed of 14 different subunits. Subunits NuoB, C, D, E, F, and G constitute the peripheral sector of the complex. Requires [4Fe-4S] cluster as cofactor.

The protein localises to the cell inner membrane. The enzyme catalyses a quinone + NADH + 5 H(+)(in) = a quinol + NAD(+) + 4 H(+)(out). NDH-1 shuttles electrons from NADH, via FMN and iron-sulfur (Fe-S) centers, to quinones in the respiratory chain. Couples the redox reaction to proton translocation (for every two electrons transferred, four hydrogen ions are translocated across the cytoplasmic membrane), and thus conserves the redox energy in a proton gradient. In Stenotrophomonas maltophilia (strain R551-3), this protein is NADH-quinone oxidoreductase subunit B.